Consider the following 465-residue polypeptide: Serine hydroxymethyltransferase (465 aa).

Residue Lys241 is modified to N6-(pyridoxal phosphate)lysine.

The protein belongs to the SHMT family. In terms of assembly, homotetramer. Pyridoxal 5'-phosphate serves as cofactor. In terms of tissue distribution, highest expression in the ovary and testis. 6- to 7-fold lower expression in hemocyte, silk gland, midgut and fat body.

It catalyses the reaction (6R)-5,10-methylene-5,6,7,8-tetrahydrofolate + glycine + H2O = (6S)-5,6,7,8-tetrahydrofolate + L-serine. It participates in one-carbon metabolism; tetrahydrofolate interconversion. Its function is as follows. Interconversion of serine and glycine. This chain is Serine hydroxymethyltransferase (692975), found in Bombyx mori (Silk moth).